The following is a 119-amino-acid chain: Large ribosomal subunit protein uL18 (119 aa).

It belongs to the universal ribosomal protein uL18 family. As to quaternary structure, part of the 50S ribosomal subunit; part of the 5S rRNA/L5/L18/L25 subcomplex. Contacts the 5S and 23S rRNAs.

Functionally, this is one of the proteins that bind and probably mediate the attachment of the 5S RNA into the large ribosomal subunit, where it forms part of the central protuberance. The polypeptide is Large ribosomal subunit protein uL18 (Malacoplasma penetrans (strain HF-2) (Mycoplasma penetrans)).